Reading from the N-terminus, the 162-residue chain is MHYVTPDLCDAYPELVQVVEPMFSNFGGRDAFGGEIVTIKCFEDNSLVKEQVDKDGKGKVLVVDGGGSLRRALLGDMLAEKAAKNGWEGIVVYGCIRDVDVIAQTELGVQALASHPMKTDKRGIGDLNVVVTFGGVTFRPGEFVYADNNGIIVSPQALNMPG.

Substrate is bound by residues 75–78 (GDML) and arginine 97. A divalent metal cation is bound at residue aspartate 98.

This sequence belongs to the class II aldolase/RraA-like family. As to quaternary structure, homotrimer. The cofactor is a divalent metal cation.

It carries out the reaction 4-hydroxy-4-methyl-2-oxoglutarate = 2 pyruvate. It catalyses the reaction oxaloacetate + H(+) = pyruvate + CO2. In terms of biological role, catalyzes the aldol cleavage of 4-hydroxy-4-methyl-2-oxoglutarate (HMG) into 2 molecules of pyruvate. Also contains a secondary oxaloacetate (OAA) decarboxylase activity due to the common pyruvate enolate transition state formed following C-C bond cleavage in the retro-aldol and decarboxylation reactions. This Pseudomonas paraeruginosa (strain DSM 24068 / PA7) (Pseudomonas aeruginosa (strain PA7)) protein is Putative 4-hydroxy-4-methyl-2-oxoglutarate aldolase.